The chain runs to 393 residues: Acetylornithine aminotransferase 1 (393 aa).

Arginine 131 provides a ligand contact to N(2)-acetyl-L-ornithine. Pyridoxal 5'-phosphate is bound at residue 215–218 (DEVQ). An N6-(pyridoxal phosphate)lysine modification is found at lysine 244. Threonine 272 provides a ligand contact to N(2)-acetyl-L-ornithine. Residue threonine 273 coordinates pyridoxal 5'-phosphate.

This sequence belongs to the class-III pyridoxal-phosphate-dependent aminotransferase family. ArgD subfamily. In terms of assembly, homodimer. Pyridoxal 5'-phosphate serves as cofactor.

The protein resides in the cytoplasm. It carries out the reaction N(2)-acetyl-L-ornithine + 2-oxoglutarate = N-acetyl-L-glutamate 5-semialdehyde + L-glutamate. The protein operates within amino-acid biosynthesis; L-arginine biosynthesis; N(2)-acetyl-L-ornithine from L-glutamate: step 4/4. In Bordetella parapertussis (strain 12822 / ATCC BAA-587 / NCTC 13253), this protein is Acetylornithine aminotransferase 1.